Reading from the N-terminus, the 316-residue chain is Very-long-chain 3-oxooacyl-coA reductase let-767 (316 aa).

NADP(+)-binding positions include 47–76 (ASWA…NVLL) and aspartate 106. Serine 189 is a substrate binding site. Tyrosine 202 acts as the Proton acceptor in catalysis. Lysine 206 contacts NADP(+).

Belongs to the short-chain dehydrogenases/reductases (SDR) family. 17-beta-HSD 3 subfamily. Expressed in the gut of larva and adult.

It catalyses the reaction a very-long-chain (3R)-3-hydroxyacyl-CoA + NADP(+) = a very-long-chain 3-oxoacyl-CoA + NADPH + H(+). The enzyme catalyses (omega-1)-methyl-(3R)-hydroxy-fatty acyl-CoA + NADP(+) = (omega-1)-methyl-3-oxo-fatty acyl-CoA + NADPH + H(+). The catalysed reaction is a 17beta-hydroxy steroid + NADP(+) = a 17-oxo steroid + NADPH + H(+). It functions in the pathway lipid metabolism; fatty acid biosynthesis. In terms of biological role, required for branched-chain fatty acid synthesis (such as (omega-1)-methyl-fatty acids). Catalyzes the reduction of the 3-keto-fatty acyl-CoA intermediate that is formed in each cycle of fatty acid elongation. Very long-chain fatty acids (VLCFAs) serve as precursors for ceramide and sphingolipids. Involved in hormone production as it metabolizes 4-androstendione (androst-4-ene-3,17-dione) into testosterone and estrone into estradiol (17beta-estradiol) in vitro, but the physiological steroid substrate is unknown. The protein is Very-long-chain 3-oxooacyl-coA reductase let-767 (let-767) of Caenorhabditis elegans.